The chain runs to 334 residues: Biotin synthase (334 aa).

Residues 48–275 enclose the Radical SAM core domain; the sequence is NQVQTSQLLS…RSMVRLSAGR (228 aa). [4Fe-4S] cluster-binding residues include Cys63, Cys67, and Cys70. Cys107, Cys138, Cys198, and Arg270 together coordinate [2Fe-2S] cluster.

This sequence belongs to the radical SAM superfamily. Biotin synthase family. Homodimer. [4Fe-4S] cluster is required as a cofactor. Requires [2Fe-2S] cluster as cofactor.

The catalysed reaction is (4R,5S)-dethiobiotin + (sulfur carrier)-SH + 2 reduced [2Fe-2S]-[ferredoxin] + 2 S-adenosyl-L-methionine = (sulfur carrier)-H + biotin + 2 5'-deoxyadenosine + 2 L-methionine + 2 oxidized [2Fe-2S]-[ferredoxin]. It functions in the pathway cofactor biosynthesis; biotin biosynthesis; biotin from 7,8-diaminononanoate: step 2/2. Catalyzes the conversion of dethiobiotin (DTB) to biotin by the insertion of a sulfur atom into dethiobiotin via a radical-based mechanism. This Maricaulis maris (strain MCS10) (Caulobacter maris) protein is Biotin synthase.